Reading from the N-terminus, the 1166-residue chain is MINVMYKNSCPNCGGDISADRLLNGLPCETCLPYINGIDGIDHISKVKALYNILLDNDKIKNYWNLYYNITTFETVFKYFKDKTGYEPWSLQKLWLRRLVSNQSFTMSAPTGLGKTTTLMTYSVFIGQDVVYIVPTKSLMEQVCKRLEKLGAQVSCGKVDQRKVSVITISYLNKNADSITSYKPNFVAIDDADAVIKSGKTTDRLVSLLGIPNDVYESAIQLIRLRNKYYFSNEFTEEIKEKIRELELKIAEFKDKISQLVIASATIRPKGIKQKALRLLTGFEPSSIQLYARNIIDTYTDNLDLSIIKELGSGGLILVSKEYGRSRLNEIKKYVEDLGFNAKLAISGRKFLDDFSQGKVDILVGSASYYGVAVRGIDEPKRLKYVIYYGVPKIKAKLFDALSNPFTLLRVGKMIGVNFSELQNKILVLSPSEAQLLKFSIIKGETINYQKLEQLRQELLYYISLVKDKLKEIGEETLISDNFVIAKQNTNYYIIYPDMITYLQGSGRASRLYNGGLTLGFSIILVDDKHIFEILKKKMQKLFPNTNFTSLSNINLSEIKTKLEESRKEEGNRVHFNISTGLLIVESPTKAKTIAKMFSRPSVRVINKVPVYETIIVDGNQIYVLDVVASKGHIVDLTLEDIGYYGIKIEYSGIIKPYYDLIKKCLDCNKTFSIASDKCPYCGSTNVQTAQTTINLLRELALSVDKVFIASDPDTEGEKIAYDLASFLSPYNSNIYRITYHEITKKAILEALRNPMKINTNLVMSQIVRRIEDRWIGFTLSNLLKTKFNGHNHGAGRVQTPVLGWIVDKTIKYKSAMGYVVYIDIAGYPIKMHFSERKKMEEYINNLQVVKIEKIFEEKILLSPLPPFTTDTLLIEANMKYKLPANLVMKIAQDLFEAGLITYHRTDSTHISSVGIEIAKEYLQKQGLIKDFVPRSWESSEEGAHEAIRPTRAIDVNELIQEIEENPYKYSIRFSKLHFLIYDLIFRRFMASQMSHAVGTKSRYLIKLNKNDNINAELLSNAEGGFIKVYPVKVYNLPLGEVKPKVNTGKGSSEQLLSYSDVISLMKSKGIGRPSTYAKTIENLVRHGYIVSSKRKSYLIATNRGISAYQFLSSKFYDLVSEGTTAKLMSKLDDIALSKLSASTVLLEIFSEISTLVNPLKSEQNV.

The RG N-terminal-type zinc finger occupies 1 to 40 (MINVMYKNSCPNCGGDISADRLLNGLPCETCLPYINGIDG). Residues C10, C13, C28, and C31 each coordinate Zn(2+). Residues Q92 and 109–116 (APTGLGKT) contribute to the ATP site. The Helicase ATP-binding domain maps to 96–285 (LRRLVSNQSF…ALRLLTGFEP (190 aa)). Residues 190-193 (DDAD) carry the DEAD box motif. The segment at 576 to 1166 (FNISTGLLIV…VNPLKSEQNV (591 aa)) is topoisomerase I. Residues 580 to 743 (TGLLIVESPT…NIYRITYHEI (164 aa)) form the Toprim domain. E586 contributes to the Mg(2+) binding site. The RG C-terminal-type zinc-finger motif lies at 662-689 (IKKCLDCNKTFSIASDKCPYCGSTNVQT). C665, C668, C679, and C682 together coordinate Zn(2+). D712 provides a ligand contact to Mg(2+). The Topo IA-type catalytic domain occupies 759–1157 (NTNLVMSQIV…EIFSEISTLV (399 aa)). The active-site O-(5'-phospho-DNA)-tyrosine intermediate is the Y903.

The protein in the N-terminal section; belongs to the DEAD box helicase family. DDVD subfamily. It in the C-terminal section; belongs to the type IA topoisomerase family. Monomer. The cofactor is Zn(2+). Requires Mg(2+) as cofactor.

It is found in the cytoplasm. It carries out the reaction ATP + H2O = ADP + phosphate + H(+). With respect to regulation, inhibited by UV light-induced lesions; substrate is completely cleaved but a nicked form accumulates, suggesting the reaction is blocked between the cleavage and ligation steps. Inhibited by actinomycin D; substrate DNA remains negatively supercoiled in this case. Activity is stimulated by SSB from S.solfataricus strain P2. Positive supercoiling is inhibited by Sul7d (also called Sso7d) from S.solfataricus strain MT4; SSB from S.solfataricus strain P2 relieves this inhibition. Its function is as follows. Modifies the topological state of DNA by introducing positive supercoils in an ATP-dependent process. Increases the linking number in steps of +1. In vitro requires high concentrations to supercoil negatively supercoiled DNA, relaxes plasmid DNA first; DNA single-strand binding protein (SSB) from S.solfataricus strain P2 stimulates positive supercoiling. SSB stimulates DNA-binding by reverse gyrase, and thus all subsequent steps. Binds to single-stranded DNA, transiently cleaves and then rejoins the ends, introducing a positive supercoil in the process. The scissile phosphodiester is attacked by the catalytic tyrosine of the enzyme, resulting in the formation of a DNA-(5'-phosphotyrosyl)-enzyme intermediate. May be involved in DNA damage response. Probably involved in rewinding DNA strands in regions of the chromosome that have opened up to allow replication, transcription, DNA repair and/or for DNA protection. The protein is Reverse gyrase of Saccharolobus shibatae (strain ATCC 51178 / DSM 5389 / JCM 8931 / NBRC 15437 / B12) (Sulfolobus shibatae).